Consider the following 106-residue polypeptide: MITVDITVNDEGKVTDVIMDGHADHGEYGHDIVCAGASAVLFGSVNAIIGLTSERPDINYDDNGGHFHIRSVDTNNDEAQLILQTMLVSLQTIEEEYNENIRLNYK.

The active-site Proton donor is H22. The Nucleophile role is filled by C34.

The protein belongs to the Prp family. As to quaternary structure, homodimer. A mutant protein unable to cleave bL27 copurifies with its substrate.

Its activity is regulated as follows. Not inhibited by short peptide analogs; a 6-mer inhibits only 20% while a 13-mer inhibits 63%. Inhibited by Ac-KLNLQFF-CH(2) which binds covalantly to Cys-34. Inhibited by mersalyl acid (C13H18HgNO6). An essential cysteine protease that cleaves the N-terminal 9 amino acids from ribosomal protein bL27. Also acts as an N-terminal protease on the major capsid and scaffold assembly proteins of bacteriophage 80alpha. Cleavage of the N-terminus of bL27 (and thus this enzyme) is essential for growth; it cannot be replaced by a 'pre-cleaved' or non-cleavable form of bL27. Might serve a chaperone function during ribosome assembly. The chain is Ribosomal processing cysteine protease Prp from Staphylococcus aureus (strain NCTC 8325 / PS 47).